We begin with the raw amino-acid sequence, 476 residues long: Beta-amyrin 28-monooxygenase (476 aa).

Residues 2 to 22 (ELLYVCLVCVFVFLVSLLLLY) traverse the membrane as a helical segment. Cys421 serves as a coordination point for heme.

The protein belongs to the cytochrome P450 family. Requires heme as cofactor. Specifically expressed in roots.

It is found in the membrane. The enzyme catalyses beta-amyrin + 3 reduced [NADPH--hemoprotein reductase] + 3 O2 = oleanolate + 3 oxidized [NADPH--hemoprotein reductase] + 4 H2O + 4 H(+). In terms of biological role, catalyzes the carboxylation of beta-amyrin at the C-28 position to form oleanolate. Catalyzes the carboxylation of alpha-amyrin at the C-28 position to form ursolate. This is Beta-amyrin 28-monooxygenase (CYP716A44) from Solanum lycopersicum (Tomato).